The primary structure comprises 490 residues: C-type lectin domain family 14 member A (490 aa).

An N-terminal signal peptide occupies residues 1–21; sequence MRPAFALCLLWQALWPGPGGG. Residues 22–397 lie on the Extracellular side of the membrane; it reads EHPTADRAGC…TPQAFDSSSA (376 aa). Residues 33–173 form the C-type lectin domain; that stretch reads ASGACYSLHH…LRANGYLCKY (141 aa). Cysteine 143 and cysteine 162 form a disulfide bridge. Asparagine 189 carries an N-linked (GlcNAc...) asparagine glycan. The 43-residue stretch at 245–287 folds into the EGF-like domain; that stretch reads PCPGRYLRAGKCAELPNCLDDLGGFACECATGFELGKDGRSCV. Residues 286–349 are disordered; it reads CVTSGEGQPT…VTSIPEIPRW (64 aa). Over residues 301-315 the composition is skewed to low complexity; it reads VPTRRPPATATSPVP. Residue asparagine 381 is glycosylated (N-linked (GlcNAc...) asparagine). Residues 398–418 form a helical membrane-spanning segment; sequence VVFIFVSTAVVVLVILTMTVL. The Cytoplasmic portion of the chain corresponds to 419–490; sequence GLVKLCFHES…AESPLGSSDA (72 aa). A disordered region spans residues 428 to 461; it reads SPSSQPRKESMGPPGLESDPEPAALGSSSAHCTN.

It localises to the membrane. This is C-type lectin domain family 14 member A (CLEC14A) from Homo sapiens (Human).